Here is a 352-residue protein sequence, read N- to C-terminus: Chalcone synthase C (352 aa).

The active site involves Cys170.

It belongs to the thiolase-like superfamily. Chalcone/stilbene synthases family.

It carries out the reaction (E)-4-coumaroyl-CoA + 3 malonyl-CoA + 3 H(+) = 2',4,4',6'-tetrahydroxychalcone + 3 CO2 + 4 CoA. The protein operates within secondary metabolite biosynthesis; flavonoid biosynthesis. Its function is as follows. The primary product of this enzyme is 4,2',4',6'-tetrahydroxychalcone (also termed naringenin-chalcone or chalcone) which can under specific conditions spontaneously isomerize into naringenin. In Ipomoea purpurea (Common morning glory), this protein is Chalcone synthase C (CHSC).